The primary structure comprises 293 residues: Release factor glutamine methyltransferase (293 aa).

S-adenosyl-L-methionine-binding positions include 130–134 (GTGSG), D153, W182, and N199. Position 199–202 (199–202 (NPPY)) interacts with substrate.

It belongs to the protein N5-glutamine methyltransferase family. PrmC subfamily.

It carries out the reaction L-glutaminyl-[peptide chain release factor] + S-adenosyl-L-methionine = N(5)-methyl-L-glutaminyl-[peptide chain release factor] + S-adenosyl-L-homocysteine + H(+). Methylates the class 1 translation termination release factors RF1/PrfA and RF2/PrfB on the glutamine residue of the universally conserved GGQ motif. The polypeptide is Release factor glutamine methyltransferase (Prochlorococcus marinus (strain SARG / CCMP1375 / SS120)).